Here is a 171-residue protein sequence, read N- to C-terminus: Transcription antitermination protein NusB (171 aa).

It belongs to the NusB family.

Functionally, involved in transcription antitermination. Required for transcription of ribosomal RNA (rRNA) genes. Binds specifically to the boxA antiterminator sequence of the ribosomal RNA (rrn) operons. The polypeptide is Transcription antitermination protein NusB (Brucella abortus (strain S19)).